Here is a 541-residue protein sequence, read N- to C-terminus: Imidazole glycerol phosphate synthase hisHF (541 aa).

A Glutamine amidotransferase type-1 domain is found at Ile-2–Ser-214. Active-site for GATase activity residues include Cys-80, His-189, and Glu-191. The interval Leu-228–Thr-541 is cyclase. Residues Asp-237 and Asp-396 contribute to the active site.

This sequence in the C-terminal section; belongs to the HisA/HisF family.

It catalyses the reaction 5-[(5-phospho-1-deoxy-D-ribulos-1-ylimino)methylamino]-1-(5-phospho-beta-D-ribosyl)imidazole-4-carboxamide + L-glutamine = D-erythro-1-(imidazol-4-yl)glycerol 3-phosphate + 5-amino-1-(5-phospho-beta-D-ribosyl)imidazole-4-carboxamide + L-glutamate + H(+). It carries out the reaction L-glutamine + H2O = L-glutamate + NH4(+). It functions in the pathway amino-acid biosynthesis; L-histidine biosynthesis; L-histidine from 5-phospho-alpha-D-ribose 1-diphosphate: step 5/9. IGPS catalyzes the conversion of PRFAR and glutamine to IGP, AICAR and glutamate. The glutaminase domain produces the ammonia necessary for the cyclase domain to produce IGP and AICAR from PRFAR. The ammonia is channeled to the active site of the cyclase domain. The protein is Imidazole glycerol phosphate synthase hisHF (his4) of Schizosaccharomyces pombe (strain 972 / ATCC 24843) (Fission yeast).